A 162-amino-acid polypeptide reads, in one-letter code: Lymphocyte antigen 86 (162 aa).

An N-terminal signal peptide occupies residues 1–19 (MNGVAAALLVWILTSPSSS). 3 disulfides stabilise this stretch: C33/C58, C45/C154, and C102/C112. An N-linked (GlcNAc...) asparagine glycan is attached at N96. N156 carries N-linked (GlcNAc...) asparagine glycosylation.

In terms of assembly, M-shaped tetramer of two CD180-LY86 heterodimers. Highly expressed in spleen, liver, brain and thymus, and at lower levels in kidney.

The protein resides in the secreted. Its subcellular location is the extracellular space. Functionally, may cooperate with CD180 and TLR4 to mediate the innate immune response to bacterial lipopolysaccharide (LPS) and cytokine production. Important for efficient CD180 cell surface expression. The protein is Lymphocyte antigen 86 (Ly86) of Mus musculus (Mouse).